The chain runs to 127 residues: Phosphoribosyl-AMP cyclohydrolase (127 aa).

A Mg(2+)-binding site is contributed by D78. Zn(2+) is bound at residue C79. Mg(2+) is bound by residues D80 and D82. C95 and C102 together coordinate Zn(2+).

Belongs to the PRA-CH family. As to quaternary structure, homodimer. Requires Mg(2+) as cofactor. Zn(2+) is required as a cofactor.

Its subcellular location is the cytoplasm. The catalysed reaction is 1-(5-phospho-beta-D-ribosyl)-5'-AMP + H2O = 1-(5-phospho-beta-D-ribosyl)-5-[(5-phospho-beta-D-ribosylamino)methylideneamino]imidazole-4-carboxamide. Its pathway is amino-acid biosynthesis; L-histidine biosynthesis; L-histidine from 5-phospho-alpha-D-ribose 1-diphosphate: step 3/9. Functionally, catalyzes the hydrolysis of the adenine ring of phosphoribosyl-AMP. The polypeptide is Phosphoribosyl-AMP cyclohydrolase (Salinibacter ruber (strain DSM 13855 / M31)).